Consider the following 84-residue polypeptide: Succinate dehydrogenase membrane anchor subunit (84 aa).

The Mitochondrial matrix segment spans residues 1–3 (MIT). Residues 4 to 24 (FQWLIVRVVALFISLTILIDI) form a helical membrane-spanning segment. At 25–31 (EMFVVML) the chain is on the mitochondrial intermembrane side. Residues 32-52 (SFLIIHISIGLKAIIHDYIHF) form a helical membrane-spanning segment. Histidine 37 provides a ligand contact to heme. Tyrosine 49 is an a ubiquinone binding site. At 53-58 (QKIKLM) the chain is on the mitochondrial matrix side. A helical membrane pass occupies residues 59-81 (LLILLRVSAIEISRSFRTFYIII). The Mitochondrial intermembrane portion of the chain corresponds to 82-84 (KNT).

In terms of assembly, part of an enzyme complex containing four subunits: a flavoprotein, an iron-sulfur protein, plus two membrane-anchoring proteins. It depends on heme as a cofactor.

Its subcellular location is the mitochondrion inner membrane. It participates in carbohydrate metabolism; tricarboxylic acid cycle. In terms of biological role, membrane-anchoring subunit of succinate dehydrogenase (SDH). The protein is Succinate dehydrogenase membrane anchor subunit (SDH4) of Chondrus crispus (Carrageen Irish moss).